Here is a 544-residue protein sequence, read N- to C-terminus: Pyruvate kinase (544 aa).

Arg31 provides a ligand contact to substrate. Positions 33 and 61 each coordinate K(+). Residue 33–36 coordinates ATP; it reads NSAH. Arg68 serves as a coordination point for ATP. Mg(2+) is bound at residue Glu204. Substrate-binding residues include Gly227, Asp228, and Thr260. Asp228 is a Mg(2+) binding site.

This sequence belongs to the pyruvate kinase family. As to quaternary structure, homotetramer. Mg(2+) is required as a cofactor. Requires K(+) as cofactor.

It catalyses the reaction pyruvate + ATP = phosphoenolpyruvate + ADP + H(+). It functions in the pathway carbohydrate degradation; glycolysis; pyruvate from D-glyceraldehyde 3-phosphate: step 5/5. This Thermoplasma acidophilum (strain ATCC 25905 / DSM 1728 / JCM 9062 / NBRC 15155 / AMRC-C165) protein is Pyruvate kinase.